A 456-amino-acid chain; its full sequence is Hydroxymethylglutaryl-CoA synthase ERG13 (456 aa).

Ala35 is a (3S)-3-hydroxy-3-methylglutaryl-CoA binding site. The active-site Proton donor/acceptor is Glu86. Residues Cys118, Asn156, Thr160, Ser210, His259, Lys268, Asn336, and Ser370 each coordinate (3S)-3-hydroxy-3-methylglutaryl-CoA. Catalysis depends on Cys118, which acts as the Acyl-thioester intermediate. The active-site Proton donor/acceptor is the His259.

This sequence belongs to the thiolase-like superfamily. HMG-CoA synthase family.

The enzyme catalyses acetoacetyl-CoA + acetyl-CoA + H2O = (3S)-3-hydroxy-3-methylglutaryl-CoA + CoA + H(+). It participates in metabolic intermediate biosynthesis; (R)-mevalonate biosynthesis; (R)-mevalonate from acetyl-CoA: step 2/3. Functionally, hydroxymethylglutaryl-CoA synthase; part of the first module of ergosterol biosynthesis pathway that includes the early steps of the pathway, conserved across all eukaryotes, and which results in the formation of mevalonate from acetyl-coenzyme A (acetyl-CoA). ERG13 condenses acetyl-CoA with acetoacetyl-CoA to form hydroxymethylglutaryl-CoA (HMG-CoA). The first module starts with the action of the cytosolic acetyl-CoA acetyltransferase ERG10B that catalyzes the formation of acetoacetyl-CoA. The hydroxymethylglutaryl-CoA synthases ERG13 then condenses acetyl-CoA with acetoacetyl-CoA to form HMG-CoA. The rate-limiting step of the early module is the reduction to mevalonate by the 3-hydroxy-3-methylglutaryl-coenzyme A (HMG-CoA) reductases HMG1. This chain is Hydroxymethylglutaryl-CoA synthase ERG13, found in Gibberella zeae (strain ATCC MYA-4620 / CBS 123657 / FGSC 9075 / NRRL 31084 / PH-1) (Wheat head blight fungus).